The sequence spans 159 residues: Ribosome maturation factor RimP (159 aa).

It belongs to the RimP family.

The protein resides in the cytoplasm. In terms of biological role, required for maturation of 30S ribosomal subunits. The chain is Ribosome maturation factor RimP from Streptococcus pneumoniae serotype 2 (strain D39 / NCTC 7466).